A 94-amino-acid chain; its full sequence is Endoribonuclease VapD 2 (94 aa).

The protein belongs to the VapD ribonuclease family. As to quaternary structure, homodimer.

In terms of biological role, cleaves ssRNA, mostly between U:A. The protein is Endoribonuclease VapD 2 of Riemerella anatipestifer (Moraxella anatipestifer).